The sequence spans 278 residues: 4-diphosphocytidyl-2-C-methyl-D-erythritol kinase (278 aa).

The active site involves Lys-9. 93–103 (PLGGGLGGGSS) is a binding site for ATP. Asp-135 is a catalytic residue.

The protein belongs to the GHMP kinase family. IspE subfamily.

It carries out the reaction 4-CDP-2-C-methyl-D-erythritol + ATP = 4-CDP-2-C-methyl-D-erythritol 2-phosphate + ADP + H(+). Its pathway is isoprenoid biosynthesis; isopentenyl diphosphate biosynthesis via DXP pathway; isopentenyl diphosphate from 1-deoxy-D-xylulose 5-phosphate: step 3/6. Catalyzes the phosphorylation of the position 2 hydroxy group of 4-diphosphocytidyl-2C-methyl-D-erythritol. In Nitrosomonas eutropha (strain DSM 101675 / C91 / Nm57), this protein is 4-diphosphocytidyl-2-C-methyl-D-erythritol kinase.